The sequence spans 204 residues: Guanylate kinase (204 aa).

In terms of domain architecture, Guanylate kinase-like spans 5 to 184 (GLLLVLSGPS…AVNHIKAIVD (180 aa)). ATP is bound at residue 12-19 (GPSGVGKG).

The protein belongs to the guanylate kinase family.

Its subcellular location is the cytoplasm. It carries out the reaction GMP + ATP = GDP + ADP. Its function is as follows. Essential for recycling GMP and indirectly, cGMP. In Lactobacillus delbrueckii subsp. bulgaricus (strain ATCC 11842 / DSM 20081 / BCRC 10696 / JCM 1002 / NBRC 13953 / NCIMB 11778 / NCTC 12712 / WDCM 00102 / Lb 14), this protein is Guanylate kinase.